A 503-amino-acid polypeptide reads, in one-letter code: MSYPGYPPPAGGYPPAAPGGGPWGGAGYPPPSMPPIGLDNVANYAGQFNQDYLSGMAANMSGTFGGANVPNLYPGAPGGGYPPVPPGGFGQPPPAQQPVPPYGMYPPPGGNPPPGMPSYPAYPGAPVPGQPMPPTGQQPPGAYPGQPPMTYPGQSPMPPPGQQPVPSYPGYSGSSTITPAVPPAQFGNRGTITAASGFDPLRDAEVLRKAMKGFGTDEQAIIDCLGSRSNKQRQQILLSFKTAYGKDLIKDLKSELSGNFEKTILALMKTPVLFDVYEIKEAIKGAGTDEACLIEIFASRSNEHIRELSRAYKTEFQKTLEEAIRSDTSGHFQRLLISLSQGNRDESTNVDMSLVQRDVQELYAAGENRLGTDESKFNAILCSRSRAHLVAVFNEYQRMTGRDIEKSICREMSGDLEQGMLAVVKCLKNTPAFFAERLNKAMRGAGTKDRTLIRIMVSRSELDLLDIRAEYKRMYGKSLYHDITGDTSGDYRKILLKICGGND.

2 stretches are compositionally biased toward pro residues: residues 80 to 117 and 123 to 167; these read GYPPVPPGGFGQPPPAQQPVPPYGMYPPPGGNPPPGMP and PGAP…PVPS. The tract at residues 80–172 is disordered; the sequence is GYPPVPPGGF…QPVPSYPGYS (93 aa). Annexin repeat units follow at residues 198 to 269, 270 to 341, 353 to 425, and 429 to 500; these read FDPL…ALMK, TPVL…SLSQ, SLVQ…AVVK, and NTPA…KICG. N6-acetyllysine is present on residues K246 and K253. An N6-acetyllysine modification is found at K477.

This sequence belongs to the annexin family. Interacts with S100A6. Interacts with PDCD6 in a calcium-dependent manner. Interacts with KIF23 during cytokinesis.

The protein localises to the cytoplasm. Its subcellular location is the melanosome. It is found in the nucleus envelope. The protein resides in the nucleus. It localises to the nucleoplasm. The protein localises to the cytoskeleton. Its subcellular location is the spindle. In terms of biological role, required for midbody formation and completion of the terminal phase of cytokinesis. Binds specifically to calcyclin in a calcium-dependent manner. In Mus musculus (Mouse), this protein is Annexin A11 (Anxa11).